The primary structure comprises 656 residues: Mucin-20 (656 aa).

The first 21 residues, 1–21 (MGSVWGLAVPLLVFCWKVGVS), serve as a signal peptide directing secretion. Composition is skewed to polar residues over residues 85–96 (ATSISSEVNSRD), 114–125 (PAASSLEAQTTS), and 159–170 (TTSPAPSFLDTQ). Disordered stretches follow at residues 85–125 (ATSI…QTTS), 159–232 (TTSP…TQTI), and 329–348 (YLSSESSSSSDSSAGVLSSS). Low complexity predominate over residues 171-227 (TTSPEPSSLTTSPAPSSLITSPTPSSLTTSPAPSFLDTQTTSPAPSSLTTSPAPSSL). 5 tandem repeats follow at residues 180–188 (TTSPAPSSL), 189–197 (ITSPTPSSL), 198–206 (TTSPAPSFL), 210–218 (TTSPAPSSL), and 219–227 (TTSPAPSSL). The tract at residues 180 to 227 (TTSPAPSSLITSPTPSSLTTSPAPSFLDTQTTSPAPSSLTTSPAPSSL) is approximate repeats. 2 N-linked (GlcNAc...) asparagine glycosylation sites follow: asparagine 366 and asparagine 570. The tract at residues 399 to 603 (TAALFTSEIL…WIRKTTKHDP (205 aa)) is involved in oligomerization. Residues 560–573 (STTASTSKNPNITL) show a composition bias toward polar residues. Positions 560–592 (STTASTSKNPNITLTKTTASPKPPTHPTTSAST) are disordered. An interaction with MET region spans residues 604–656 (GEDGGFLLVRLTVASPKDLTEHNAREKLMNQLRRELHARMPLVHMSFLSIRRG).

Interacts with MET; oligomerization increases affinity for MET. As to expression, highly expressed in kidney. Up-regulated in renal tissues during renal injury.

It localises to the secreted. Its subcellular location is the apical cell membrane. It is found in the basolateral cell membrane. The protein resides in the cell projection. The protein localises to the microvillus membrane. Functionally, may regulate MET signaling cascade. Seems to decrease hepatocyte growth factor (HGF)-induced transient MAPK activation. Blocks GRB2 recruitment to MET thus suppressing the GRB2-RAS pathway. Inhibits HGF-induced proliferation of MMP1 and MMP9 expression. This is Mucin-20 (Muc20) from Mus musculus (Mouse).